We begin with the raw amino-acid sequence, 228 residues long: uncharacterized protein (228 aa).

The 222-residue stretch at 7 to 228 (VEVHHLKKSV…LVNGQLQEEA (222 aa)) folds into the ABC transporter domain. Residue 43 to 50 (GESGSGKS) participates in ATP binding.

This sequence belongs to the ABC transporter superfamily.

This is an uncharacterized protein from Escherichia coli O157:H7.